Here is a 327-residue protein sequence, read N- to C-terminus: GTP 3',8-cyclase (327 aa).

Residues 4-226 (AFARDIHYLR…LRLGDHPGIR (223 aa)) enclose the Radical SAM core domain. A GTP-binding site is contributed by Arg-13. [4Fe-4S] cluster contacts are provided by Cys-20 and Cys-24. Position 26 (Tyr-26) interacts with S-adenosyl-L-methionine. Cys-27 provides a ligand contact to [4Fe-4S] cluster. Arg-63 contacts GTP. Gly-67 is an S-adenosyl-L-methionine binding site. Thr-94 contacts GTP. Ser-118 is an S-adenosyl-L-methionine binding site. Lys-155 contacts GTP. Met-189 is a binding site for S-adenosyl-L-methionine. [4Fe-4S] cluster-binding residues include Cys-254 and Cys-257. 259–261 (RLR) contacts GTP. [4Fe-4S] cluster is bound at residue Cys-271.

Belongs to the radical SAM superfamily. MoaA family. In terms of assembly, monomer and homodimer. Requires [4Fe-4S] cluster as cofactor.

The enzyme catalyses GTP + AH2 + S-adenosyl-L-methionine = (8S)-3',8-cyclo-7,8-dihydroguanosine 5'-triphosphate + 5'-deoxyadenosine + L-methionine + A + H(+). The protein operates within cofactor biosynthesis; molybdopterin biosynthesis. Functionally, catalyzes the cyclization of GTP to (8S)-3',8-cyclo-7,8-dihydroguanosine 5'-triphosphate. The protein is GTP 3',8-cyclase of Heliobacterium modesticaldum (strain ATCC 51547 / Ice1).